Consider the following 893-residue polypeptide: DNA endonuclease RBBP8 (893 aa).

Positions 22–45 (ELWTKLKEYHDKEVQGLQVKVTKL) are essential for binding to the MRN complex and for RPA focus formation on DNA damage. Residues 35–84 (VQGLQVKVTKLKKERILDAQRLEEFFTKNQQLRDQQKVLQETIKILEDRL) adopt a coiled-coil conformation. The interval 45-160 (LKKERILDAQ…AELACEENII (116 aa)) is required for interaction with LMO4, probably by stabilizing the interaction through RPPB8 dimerization. Residues Lys-62 and Lys-115 each participate in a glycyl lysine isopeptide (Lys-Gly) (interchain with G-Cter in SUMO2) cross-link. Positions 117–138 (ITELMNEKNTLQEENKKLSEQL) form a coiled coil. Lys-193 participates in a covalent cross-link: Glycyl lysine isopeptide (Lys-Gly) (interchain with G-Cter in SUMO2). Phosphoserine occurs at positions 233 and 276. The segment covering 296–307 (MESARSKEDSLR) has biased composition (basic and acidic residues). The interval 296 to 324 (MESARSKEDSLRFSDSASKTPPQEFTTRA) is disordered. Residues 308–324 (FSDSASKTPPQEFTTRA) are compositionally biased toward polar residues. Thr-315 is modified (phosphothreonine). Phosphoserine occurs at positions 325, 326, and 348. Glycyl lysine isopeptide (Lys-Gly) (interchain with G-Cter in SUMO2) cross-links involve residues Lys-359 and Lys-377. Position 378 is a phosphoserine (Ser-378). Residues Lys-394, Lys-403, Lys-409, and Lys-437 each participate in a glycyl lysine isopeptide (Lys-Gly) (interchain with G-Cter in SUMO2) cross-link. Residues 489–493 (PLDLS) carry the PXDLS motif motif. The damage-recruitment motif stretch occupies residues 508–556 (NETSKNKLKQATIYEALKPIPKGSSSGRKALSGDCMPAKDSWETYCLQP). Residue Lys-525 forms a Glycyl lysine isopeptide (Lys-Gly) (interchain with G-Cter in SUMO2); alternate linkage. Residues Lys-529, Lys-570, and Lys-576 each participate in a glycyl lysine isopeptide (Lys-Gly) (interchain with G-Cter in SUMO2) cross-link. A Glycyl lysine isopeptide (Lys-Gly) (interchain with G-Cter in SUMO2); alternate cross-link involves residue Lys-602. Glycyl lysine isopeptide (Lys-Gly) (interchain with G-Cter in SUMO2) cross-links involve residues Lys-611, Lys-636, and Lys-638. The interval 639–683 (ALPSNQDTSFENIQWSVDPGADLSQYKMDVTVIDTKDSSHSRLGG) is required for interaction with LMO4, probably by making physical contact with LMO4. Ser-662 bears the Phosphoserine; by ATM mark. A Glycyl lysine isopeptide (Lys-Gly) (interchain with G-Cter in SUMO2) cross-link involves residue Lys-674. At Ser-677 the chain carries Phosphoserine. Residue Lys-716 forms a Glycyl lysine isopeptide (Lys-Gly) (interchain with G-Cter in SUMO2) linkage. At Ser-720 the chain carries Phosphoserine. Ser-742 is modified (phosphoserine; by ATM). A Glycyl lysine isopeptide (Lys-Gly) (interchain with G-Cter in SUMO2) cross-link involves residue Lys-778. The KLHL15-binding signature appears at 836–838 (FRY). Phosphothreonine occurs at positions 843 and 855. Residue Lys-865 forms a Glycyl lysine isopeptide (Lys-Gly) (interchain with G-Cter in SUMO2) linkage. The disordered stretch occupies residues 869–893 (DLSPRPKRRQPYNAVFSPKGKEQRT).

The protein belongs to the COM1/SAE2/CtIP family. As to quaternary structure, homotetramer; formed by antiparallel association of helical extensions protruding from the N-termini of two parallel coiled-coil dimers. Forms a dumbbell-shaped particle in which polar globular domains are held about 30 nm apart by a central rod. Homotetramerization is required for DNA-end resection and repair. Interacts (via the PXDLS motif) with CTBP1; the interaction is disrupted via binding of the adenovirus E1A to CTBP1. Component of the BRCA1-RBBP8 complex. Interacts (the Ser-326 phosphorylated form) with BRCA1 (via the C-terminal BRCT domains): the interaction occurs in the G2 phase, ubiquitinates RBBP8 and involves RBBP8 in BRCA1-dependent G2/M checkpoint control on DNA damage. Interacts with RB1. Interacts with the MRN complex. Interacts directly with MRE11; the interaction is required for efficient homologous recombination (HR) and regulation of the MRN complex. Interacts (when phosphorylated by CDK1) with NBN; promoting association with the MRN complex. Interacts with LMO4 (via the LIM zinc-binding 1 domain). Interacts with SIAH1. Interacts with RNF138. Interacts with EXD2. Interacts with CUL3 and KLHL15; this interaction leads to RBBP8 proteasomal degradation. Directly interacts with PIN1; this interaction depends upon RBBP8 phosphorylation, predominantly at Thr-315. Interacts with FZR1; this interaction leads to APC/C-mediated RBBP8 proteasomal degradation. Interacts with AUNIP; leading to recruit RBBP8 to sites of DNA damage. Interacts with SAMHD1. Interacts with HDGFL2. Hyperphosphorylation upon ionizing radiation results in dissociation from BRCA1. Phosphorylation at Thr-843 by CDK1 is essential for the recruitment to DNA and the DNA repair function. Phosphorylation at Thr-843 and Thr-855 promote interaction with NBN and recruitment to double-strand breaks (DSBs). Phosphorylated on Ser-326 as cells enter G2 phase. Phosphorylated at Ser-326 as cells enter G2 phase. This phosphorylation is required for binding BRCA1 and for the G2/M DNA damage transition checkpoint control. Phosphorylation at Thr-315 is required for PIN1-binding, while phosphorylation at Ser-276 serves as a PIN1 isomerization site. Phosphorylation at Thr-315 is cell-cycle dependent. It steadily increases during S phase, peaks at late S/G2 phase, and drops at G1. Phosphorylation is not required for tetramerization. Binds to DNA more strongly when dephosphorylated. Post-translationally, ubiquitinated. Ubiquitination at multiple sites by BRCA1 (via its N-terminal RING domain) does not lead to its proteasomal degradation but instead the ubiquitinated RBBP8 binds to chromatin following DNA damage and may play a role in G2/M checkpoint control. Ubiquitinated by RNF138 at its N-terminus. Ubiquitinated through 'Lys-48' by the E3 CUL3-KLHL15 complex; this modification leads to proteasomal degradation. Ubiquitinated by the E3 FZR1/APC/C complex; this modification leads to proteasomal degradation.

It localises to the nucleus. Its subcellular location is the chromosome. In terms of biological role, endonuclease that cooperates with the MRE11-RAD50-NBN (MRN) complex in DNA-end resection, the first step of double-strand break (DSB) repair through the homologous recombination (HR) pathway. HR is restricted to S and G2 phases of the cell cycle and preferentially repairs DSBs resulting from replication fork collapse. Key determinant of DSB repair pathway choice, as it commits cells to HR by preventing classical non-homologous end-joining (NHEJ). Specifically promotes the endonuclease activity of the MRN complex to clear DNA ends containing protein adducts: recruited to DSBs by NBN following phosphorylation by CDK1, and promotes the endonuclease activity of MRE11 to clear protein-DNA adducts and generate clean double-strand break ends. Functions downstream of the MRN complex and ATM, promotes ATR activation and its recruitment to DSBs in the S/G2 phase facilitating the generation of ssDNA. Component of the BRCA1-RBBP8 complex that regulates CHEK1 activation and controls cell cycle G2/M checkpoints on DNA damage. During immunoglobulin heavy chain class-switch recombination, promotes microhomology-mediated alternative end joining (A-NHEJ) and plays an essential role in chromosomal translocations. Binds preferentially to DNA Y-junctions and to DNA substrates with blocked ends and promotes intermolecular DNA bridging. The chain is DNA endonuclease RBBP8 (Rbbp8) from Mus musculus (Mouse).